Here is a 688-residue protein sequence, read N- to C-terminus: Protein sel-1 homolog 2 (688 aa).

Residues 1 to 18 form the signal peptide; the sequence is MNPLALLVEILIIIEVTT. The Extracellular portion of the chain corresponds to 19 to 662; it reads KNSEAERYNR…KWKWLKLDST (644 aa). The N-linked (GlcNAc...) asparagine glycan is linked to asparagine 34. Sel1-like repeat units lie at residues 107 to 142, 143 to 178, 179 to 214, 215 to 250, 297 to 333, 334 to 370, 371 to 406, 407 to 442, 443 to 478, 551 to 586, and 588 to 623; these read GDEL…DMGN, LKAM…KEGS, YKAQ…AGGS, MMSQ…DYIA, VQIQ…KAGS, ANAM…SKGN, AIGL…EKGW, PNAQ…QSGQ, PLAI…ELGH, AFAR…DKHH, and AQAM…QTSP. Asparagine 162 carries N-linked (GlcNAc...) asparagine glycosylation. The helical transmembrane segment at 663 to 683 threads the bilayer; that stretch reads IGPYWDLLVIGLIVVVLIFLL. Over 684 to 688 the chain is Cytoplasmic; sequence RNHHR.

This sequence belongs to the sel-1 family.

It is found in the membrane. The protein resides in the cell projection. The protein localises to the cilium. Its subcellular location is the nucleus speckle. In Rattus norvegicus (Rat), this protein is Protein sel-1 homolog 2 (Sel1l2).